The sequence spans 353 residues: Melanin-concentrating hormone receptor 1 (353 aa).

Positions 1–29 are disordered; the sequence is MDLEASLLPTGPNASNTSDGPDNLTSAGS. Over 1–44 the chain is Extracellular; the sequence is MDLEASLLPTGPNASNTSDGPDNLTSAGSPPRTGSISYINIIMP. The span at 12-29 shows a compositional bias: polar residues; that stretch reads PNASNTSDGPDNLTSAGS. 3 N-linked (GlcNAc...) asparagine glycosylation sites follow: N13, N16, and N23. Residues 45-67 form a helical membrane-spanning segment; it reads SVFGTICLLGIIGNSTVIFAVVK. Over 68–79 the chain is Cytoplasmic; sequence KSKLHWCNNVPD. The helical transmembrane segment at 80-102 threads the bilayer; that stretch reads IFIINLSVVDLLFLLGMPFMIHQ. Over 103-116 the chain is Extracellular; the sequence is LMGNGVWHFGETMC. An intrachain disulfide couples C116 to C194. Residues 117–139 traverse the membrane as a helical segment; that stretch reads TLITAMDANSQFTSTYILTAMAI. Residues 140-158 lie on the Cytoplasmic side of the membrane; sequence DRYLATVHPISSTKFRKPS. Residues 159 to 181 traverse the membrane as a helical segment; sequence VATLVICLLWALSFISITPVWLY. At 182–209 the chain is on the extracellular side; sequence ARLIPFPGGAVGCGIRLPNPDTDLYWFT. A helical transmembrane segment spans residues 210–232; it reads LYQFFLAFALPFVVITAAYVRIL. Residues 233 to 252 are Cytoplasmic-facing; that stretch reads QRMTSSVAPASQRSIRLRTK. The chain crosses the membrane as a helical span at residues 253 to 275; that stretch reads RVTRTAIAICLVFFVCWAPYYVL. Residues 276 to 289 lie on the Extracellular side of the membrane; that stretch reads QLTQLSISRPTLTF. The chain crosses the membrane as a helical span at residues 290 to 312; it reads VYLYNAAISLGYANSCLNPFVYI. The Cytoplasmic portion of the chain corresponds to 313–353; the sequence is VLCETFRKRLVLSVKPAAQGQLRAVSNAQTADEERTESKGT.

Belongs to the G-protein coupled receptor 1 family. Interacts with NCDN. Highest level in brain, particularly in the frontal cortex and hypothalamus, lower levels in the liver and heart.

Its subcellular location is the cell membrane. In terms of biological role, receptor for melanin-concentrating hormone, coupled to both G proteins that inhibit adenylyl cyclase and G proteins that activate phosphoinositide hydrolysis. This Homo sapiens (Human) protein is Melanin-concentrating hormone receptor 1.